Consider the following 657-residue polypeptide: ABC1 family protein YPL109C, mitochondrial (657 aa).

Residues 1–15 constitute a mitochondrion transit peptide; it reads MSFLKFAYRNSWRYY.

It belongs to the protein kinase superfamily. ADCK protein kinase family.

It is found in the mitochondrion. The sequence is that of ABC1 family protein YPL109C, mitochondrial from Saccharomyces cerevisiae (strain ATCC 204508 / S288c) (Baker's yeast).